The following is an 87-amino-acid chain: Large ribosomal subunit protein eL33 (87 aa).

It belongs to the eukaryotic ribosomal protein eL33 family.

This chain is Large ribosomal subunit protein eL33, found in Pyrococcus horikoshii (strain ATCC 700860 / DSM 12428 / JCM 9974 / NBRC 100139 / OT-3).